Reading from the N-terminus, the 278-residue chain is RsbT co-antagonist protein RsbRD (278 aa).

One can recognise an STAS domain in the interval 160–271; sequence SAPIMPITDG…QSLAKALANK (112 aa). Residue T181 is modified to Phosphothreonine.

Probably present in the stressosome with RsbRA, RsbRB, RsbRC and RsbS. Phosphorylated by RsbT.

One of 4 functionally non-identical RsbR paralogs, it functions in the environmental signaling branch of the general stress response. Functionally, negative regulator of sigma-B activity. Non-phosphorylated RsbS binds to RsbT, preventing its association with RsbU. Requires any one of RsbRA, RsbRB, RsbRC or RsbRD to sequester RsbT. When RsbS and the RsbR paralog(s) are phosphorylated, they release RsbT, which can then bind and activate RsbU. The chain is RsbT co-antagonist protein RsbRD (rsbRD) from Bacillus subtilis (strain 168).